Consider the following 675-residue polypeptide: MACSTLPKSPKDKIDPRDLLIPLILFLSLKGARSAAPGSSPHQVYNITWEVTNGDRETVWAISGNHPLWTWWPVLTPDLCMLALSGPPHWGLEYQAPYSSPPGPPCCSGSSGSSAGCSRDCDEPLTSLTPRCNTAWNRLKLDQVTHKSSEGFYVCPGSHRPREAKSCGGPDSFYCASWGCETTGRVYWKPSSSWDYITVDNNLTTSQAVQVCKDNKWCNPLAIQFTNAGKQVTSWTTGHYWGLRLYVSGRDPGLTFGIRLRYQNLGPRVPIGPNPVLADQLSLPRPNPLPKPAKSPPASNSTPTLISPSPTPTQPPPAGTGDRLLNLVQGAYQALNLTNPDKTQECWLCLVSGPPYYEGVAVLGTYSNHTSAPANCSVASQHKLTLSEVTGRGLCIGTVPKTHQALCNTTLKIDKGSYYLVAPTGTTWACNTGLTPCLSATVLNRTTDYCVLVELWPRVTYHPPSYVYSQFEKSYRHKREPVSLTLALLLGGLTMGGIAAGVGTGTTALVATQQFQQLHAAVQDDLKEVEKSITNLEKSLTSLSEVVLQNRRGLDLLFLKEGGLCAALKEECCFYADHTGLVRDSMAKLRERLTQRQKLFESSQGWFEGLFNRSPWFTTLISTIMGPLIILLLILLFGPCILNRLVQFVKDRISVVQALVLTQQYHQLKPLEYEP.

Residues 1-34 form the signal peptide; sequence MACSTLPKSPKDKIDPRDLLIPLILFLSLKGARS. Residues 35 to 270 form a receptor-binding domain (RBD) region; sequence AAPGSSPHQV…RYQNLGPRVP (236 aa). Residues 35-620 are Extracellular-facing; the sequence is AAPGSSPHQV…FNRSPWFTTL (586 aa). The N-linked (GlcNAc...) asparagine; by host glycan is linked to N46. 5 disulfides stabilise this stretch: C80–C132, C106–C121, C107–C117, C155–C175, and C167–C180. H89 provides a ligand contact to Zn(2+). D120 is a binding site for Zn(2+). Residue N202 is glycosylated (N-linked (GlcNAc...) asparagine; by host). A disulfide bridge links C212 with C218. The segment at 276–323 is disordered; that stretch reads VLADQLSLPRPNPLPKPAKSPPASNSTPTLISPSPTPTQPPPAGTGDR. Residues 285–295 show a composition bias toward pro residues; that stretch reads RPNPLPKPAKS. Over residues 296-308 the composition is skewed to low complexity; sequence PPASNSTPTLISP. Pro residues predominate over residues 309–318; sequence SPTPTQPPPA. Residue N336 is glycosylated (N-linked (GlcNAc...) asparagine; by host). Intrachain disulfides connect C346–C349, C346–C573, C376–C430, C395–C407, C437–C450, and C565–C572. Residues 346–349 carry the CXXC motif; sequence CWLC. 2 N-linked (GlcNAc...) asparagine; by host glycosylation sites follow: N368 and N375. N-linked (GlcNAc...) asparagine; by host glycans are attached at residues N408 and N444. Residues 482–502 are fusion peptide; sequence VSLTLALLLGGLTMGGIAAGV. Residues 513-547 adopt a coiled-coil conformation; sequence QQFQQLHAAVQDDLKEVEKSITNLEKSLTSLSEVV. Residues 548 to 564 are immunosuppression; it reads LQNRRGLDLLFLKEGGL. The CX6CC signature appears at 565–573; it reads CAALKEECC. The helical transmembrane segment at 621–641 threads the bilayer; sequence ISTIMGPLIILLLILLFGPCI. C640 carries the S-palmitoyl cysteine; by host lipid modification. Residues 642-675 lie on the Cytoplasmic side of the membrane; the sequence is LNRLVQFVKDRISVVQALVLTQQYHQLKPLEYEP. The YXXL motif; contains endocytosis signal motif lies at 665-668; sequence YHQL.

In terms of assembly, the mature envelope protein (Env) consists of a trimer of SU-TM heterodimers attached by a labile interchain disulfide bond. In terms of processing, specific enzymatic cleavages in vivo yield mature proteins. Envelope glycoproteins are synthesized as an inactive precursor that is N-glycosylated and processed likely by host cell furin or by a furin-like protease in the Golgi to yield the mature SU and TM proteins. The cleavage site between SU and TM requires the minimal sequence [KR]-X-[KR]-R. The R-peptide is released from the C-terminus of the cytoplasmic tail of the TM protein upon particle formation as a result of proteolytic cleavage by the viral protease. Cleavage of this peptide is required for TM to become fusogenic. The CXXC motif is highly conserved across a broad range of retroviral envelope proteins. It is thought to participate in the formation of a labile disulfide bond possibly with the CX6CC motif present in the transmembrane protein. Isomerization of the intersubunit disulfide bond to an SU intrachain disulfide bond is thought to occur upon receptor recognition in order to allow membrane fusion. Post-translationally, the transmembrane protein is palmitoylated. In terms of processing, the R-peptide is palmitoylated.

It localises to the virion membrane. The protein localises to the host cell membrane. The surface protein (SU) attaches the virus to the host cell by binding to its receptor. This interaction triggers the refolding of the transmembrane protein (TM) and is thought to activate its fusogenic potential by unmasking its fusion peptide. Fusion occurs at the host cell plasma membrane. Its function is as follows. The transmembrane protein (TM) acts as a class I viral fusion protein. Under the current model, the protein has at least 3 conformational states: pre-fusion native state, pre-hairpin intermediate state, and post-fusion hairpin state. During viral and target cell membrane fusion, the coiled coil regions (heptad repeats) assume a trimer-of-hairpins structure, positioning the fusion peptide in close proximity to the C-terminal region of the ectodomain. The formation of this structure appears to drive apposition and subsequent fusion of viral and target cell membranes. Membranes fusion leads to delivery of the nucleocapsid into the cytoplasm. In Mus musculus (Mouse), this protein is Envelope glycoprotein (env).